A 530-amino-acid polypeptide reads, in one-letter code: Membrane-associated transporter protein (530 aa).

Over 1–46 (MGSNSGQAGRHIYKSLADDGPFDSVEPPKRPTSRLIMHSMAMFGRE) the chain is Cytoplasmic. Residues 47-67 (FCYAVEAAYVTPVLLSVGLPS) traverse the membrane as a helical segment. Ser68 is a topological domain (extracellular). A helical membrane pass occupies residues 69–89 (LYSIVWFLSPILGFLLQPVVG). The Cytoplasmic portion of the chain corresponds to 90 to 110 (SASDHCRSRWGRRRPYILTLG). The chain crosses the membrane as a helical span at residues 111–131 (VMMLVGMALYLNGATVVAALI). Residues 132 to 138 (ANPRRKL) lie on the Extracellular side of the membrane. A helical transmembrane segment spans residues 139–159 (VWAISVTMIGVVLFDFAADFI). Over 160–184 (DGPIKAYLFDVCSHQDKEKGLHYHA) the chain is Cytoplasmic. A helical transmembrane segment spans residues 185–205 (LFTGFGGALGYLLGAIDWAHL). The Extracellular portion of the chain corresponds to 206–216 (ELGRLLGTEFQ). A helical membrane pass occupies residues 217-237 (VMFFFSALVLTLCFTVHLCSI). The Cytoplasmic portion of the chain corresponds to 238–318 (SEAPLTEVAK…ALVNMPPHYR (81 aa)). The chain crosses the membrane as a helical span at residues 319–339 (YLCISHLIGWTAFLSNMLFFT). The Extracellular segment spans residues 340–366 (DFMGQIVYRGDPYSAHNSTEFLIYERG). Asn356 is a glycosylation site (N-linked (GlcNAc...) asparagine). Residues 367–387 (VEVGCWGLCINSVFSSLYSYF) form a helical membrane-spanning segment. The Cytoplasmic segment spans residues 388 to 398 (QKVLVSYIGLK). The chain crosses the membrane as a helical span at residues 399-419 (GLYFTGYLLFGLGTGFIGLFP). Topologically, residues 420–425 (NVYSTL) are extracellular. Residues 426-446 (VLCSLFGVMSSTLYTVPFNLI) traverse the membrane as a helical segment. Residues 447–477 (TEYHREEEKERQQAPGGDPDNSVRGKGMDCA) lie on the Cytoplasmic side of the membrane. The helical transmembrane segment at 478–498 (TLTCMVQLAQILVGGGLGFLV) threads the bilayer. Over 499–504 (NTAGTV) the chain is Extracellular. A helical membrane pass occupies residues 505–525 (VVVVITASAVALIGCCFVALF). Over 526–530 (VRYVD) the chain is Cytoplasmic.

It belongs to the glycoside-pentoside-hexuronide (GPH) cation symporter transporter (TC 2.A.2) family. In terms of assembly, interacts with TYRP1. Expressed in mature melanocytes.

It localises to the melanosome membrane. It carries out the reaction sucrose(out) + H(+)(out) = sucrose(in) + H(+)(in). The enzyme catalyses D-glucose(out) + H(+)(out) = D-glucose(in) + H(+)(in). Its function is as follows. Proton-associated glucose and sucrose transporter. May be able to transport also fructose. Expressed at a late melanosome maturation stage where functions as proton/glucose exporter which increase lumenal pH by decreasing glycolysis. Regulates melanogenesis by maintaining melanosome neutralization that is initially initiated by transient OCA2 and required for a proper function of the tyrosinase TYR. This is Membrane-associated transporter protein from Homo sapiens (Human).